Here is a 352-residue protein sequence, read N- to C-terminus: 2'-dehydrokanamycin reductase (352 aa).

This sequence belongs to the NAD(P)-dependent epimerase/dehydratase family.

The enzyme catalyses 2'-dehydrokanamycin A + NADPH + H(+) = kanamycin A + NADP(+). The protein operates within antibiotic biosynthesis; kanamycin biosynthesis. Its function is as follows. Mediates the conversion of 2'-dehydrokanamycin A into kanamycin A. This chain is 2'-dehydrokanamycin reductase (kanK), found in Streptomyces kanamyceticus.